We begin with the raw amino-acid sequence, 554 residues long: Condensin-2 complex subunit H2 (554 aa).

A phosphoserine mark is found at Ser45, Ser178, Ser182, Ser199, and Ser200. The interval 154–296 is disordered; it reads PVDVHPMPRS…GQKRKRKGAT (143 aa). Residues 179–191 show a composition bias toward polar residues; it reads RNGSPVSVRSISQ. Acidic residues predominate over residues 201 to 210; the sequence is GDEDAEDVAE. The residue at position 441 (Ser441) is a Phosphoserine.

This sequence belongs to the CND2 H2 (condensin-2 subunit 2) family. As to quaternary structure, component of the condensin-2 complex, which contains the SMC2 and SMC4 heterodimer, and three non SMC subunits, NCAPG2, NCAPH2 and NCAPD3 that probably regulate the complex.

It localises to the nucleus. Functionally, regulatory subunit of the condensin-2 complex, a complex that seems to provide chromosomes with an additional level of organization and rigidity and in establishing mitotic chromosome architecture. May promote the resolution of double-strand DNA catenanes (intertwines) between sister chromatids. Condensin-mediated compaction likely increases tension in catenated sister chromatids, providing directionality for type II topoisomerase-mediated strand exchanges toward chromatid decatenation. Required for decatenation of chromatin bridges at anaphase. Early in neurogenesis, may play an essential role to ensure accurate mitotic chromosome condensation in neuron stem cells, ultimately affecting neuron pool and cortex size. Seems to have lineage-specific role in T-cell development. The protein is Condensin-2 complex subunit H2 (Ncaph2) of Rattus norvegicus (Rat).